A 187-amino-acid chain; its full sequence is Elongation factor P (187 aa).

Belongs to the elongation factor P family.

The protein localises to the cytoplasm. The protein operates within protein biosynthesis; polypeptide chain elongation. Involved in peptide bond synthesis. Stimulates efficient translation and peptide-bond synthesis on native or reconstituted 70S ribosomes in vitro. Probably functions indirectly by altering the affinity of the ribosome for aminoacyl-tRNA, thus increasing their reactivity as acceptors for peptidyl transferase. This Mycobacterium avium (strain 104) protein is Elongation factor P.